Consider the following 431-residue polypeptide: Peroxisomal biogenesis factor 3 (431 aa).

Topologically, residues 1–10 (MDFFRRHQKK) are peroxisomal. Residues 11–28 (VLALVGVALSSYLFIDYV) form a helical membrane-spanning segment. At 29–431 (KKKFFEIQGR…VVYSSFDWAL (403 aa)) the chain is on the cytoplasmic side. Residues 95-126 (TDRVLALESSTSSSATAQTVPTMTSGATEEGE) form a disordered region. The segment covering 112-121 (QTVPTMTSGA) has biased composition (polar residues).

It belongs to the peroxin-3 family.

Its subcellular location is the peroxisome membrane. Functionally, involved in peroxisome biosynthesis. Seems to directly or indirectly sequesters components of the peroxisome biogenesis machinery. This Yarrowia lipolytica (strain CLIB 122 / E 150) (Yeast) protein is Peroxisomal biogenesis factor 3 (PEX3).